Here is a 103-residue protein sequence, read N- to C-terminus: Histone H4 (103 aa).

The tract at residues 1–32 (MNTQSIGAKGKSKAAKGIAKRHRKQSSLSDSI) is disordered. Over residues 10–25 (GKSKAAKGIAKRHRKQ) the composition is skewed to basic residues. Lysine 16 carries the post-translational modification N6-acetyl-N6-methyllysine; alternate. N6-methyllysine; alternate is present on lysine 16. Residues 20-24 (KRHRK) mediate DNA binding. Lysine 94 is modified (N6-glutaryllysine).

The protein belongs to the histone H4 family. In terms of assembly, the nucleosome is a histone octamer containing two molecules each of H2A, H2B, H3 and H4 assembled in one H3-H4 heterotetramer and two H2A-H2B heterodimers. The octamer wraps approximately 147 bp of DNA. In terms of processing, glutarylation at Lys-94 (H4K91glu) destabilizes nucleosomes by promoting dissociation of the H2A-H2B dimers from nucleosomes.

It is found in the nucleus. It localises to the chromosome. Functionally, core component of nucleosome. Nucleosomes wrap and compact DNA into chromatin, limiting DNA accessibility to the cellular machineries which require DNA as a template. Histones thereby play a central role in transcription regulation, DNA repair, DNA replication and chromosomal stability. DNA accessibility is regulated via a complex set of post-translational modifications of histones, also called histone code, and nucleosome remodeling. This Encephalitozoon cuniculi (strain GB-M1) (Microsporidian parasite) protein is Histone H4 (HHF1).